The chain runs to 811 residues: DNA mismatch repair protein MutS (811 aa).

595 to 602 (GPNMSGKS) is a binding site for ATP.

Belongs to the DNA mismatch repair MutS family.

Functionally, this protein is involved in the repair of mismatches in DNA. It is possible that it carries out the mismatch recognition step. This protein has a weak ATPase activity. The polypeptide is DNA mismatch repair protein MutS (Pseudothermotoga lettingae (strain ATCC BAA-301 / DSM 14385 / NBRC 107922 / TMO) (Thermotoga lettingae)).